A 117-amino-acid polypeptide reads, in one-letter code: Large ribosomal subunit protein bL19 (117 aa).

The protein belongs to the bacterial ribosomal protein bL19 family.

In terms of biological role, this protein is located at the 30S-50S ribosomal subunit interface and may play a role in the structure and function of the aminoacyl-tRNA binding site. In Vesicomyosocius okutanii subsp. Calyptogena okutanii (strain HA), this protein is Large ribosomal subunit protein bL19.